A 399-amino-acid chain; its full sequence is Arginase (399 aa).

Residues His193, Asp216, His218, and Asp220 each contribute to the Mn(2+) site. Substrate-binding positions include 218–222 (HADIN), 229–231 (SGN), and Asp273. The Mn(2+) site is built by Asp322 and Asp324. Positions 336 and 367 each coordinate substrate.

This sequence belongs to the arginase family. It depends on Mn(2+) as a cofactor.

The protein resides in the cytoplasm. It catalyses the reaction L-arginine + H2O = urea + L-ornithine. It functions in the pathway nitrogen metabolism; urea cycle; L-ornithine and urea from L-arginine: step 1/1. This is Arginase (CAR1) from Eremothecium gossypii (strain ATCC 10895 / CBS 109.51 / FGSC 9923 / NRRL Y-1056) (Yeast).